We begin with the raw amino-acid sequence, 266 residues long: DNA damage-regulated autophagy modulator protein 2 (266 aa).

Transmembrane regions (helical) follow at residues leucine 8–isoleucine 28, lysine 53–valine 73, asparagine 92–phenylalanine 112, phenylalanine 117–phenylalanine 137, leucine 160–leucine 180, and isoleucine 207–isoleucine 227.

This sequence belongs to the DRAM/TMEM150 family.

The protein resides in the lysosome membrane. It localises to the photoreceptor inner segment. It is found in the apical cell membrane. Functionally, plays a role in the initiation of autophagy. In the retina, might be involved in the process of photoreceptor cells renewal and recycling to preserve visual function. Induces apoptotic cell death when coexpressed with DRAM1. The polypeptide is DNA damage-regulated autophagy modulator protein 2 (DRAM2) (Bos taurus (Bovine)).